The primary structure comprises 271 residues: DNA repair protein RecO (271 aa).

The segment covering 249–264 (VRVEDSVRQDGDRDST) has biased composition (basic and acidic residues). Residues 249–271 (VRVEDSVRQDGDRDSTTRTSSPA) form a disordered region.

The protein belongs to the RecO family.

In terms of biological role, involved in DNA repair and RecF pathway recombination. The sequence is that of DNA repair protein RecO from Rhodococcus jostii (strain RHA1).